The chain runs to 128 residues: CD59 glycoprotein (128 aa).

The first 25 residues, methionine 1–serine 25, serve as a signal peptide directing secretion. Residues leucine 26–serine 108 form the UPAR/Ly6 domain. 3 disulfide bridges follow: cysteine 28–cysteine 51, cysteine 31–cysteine 38, and cysteine 44–cysteine 64. Residue asparagine 43 is glycosylated (N-linked (GlcNAc...) asparagine). N-linked (Glc) (glycation) lysine glycosylation occurs at lysine 66. Disulfide bonds link cysteine 70-cysteine 88 and cysteine 89-cysteine 94. Residues threonine 76 and threonine 77 are each glycosylated (O-linked (GalNAc...) threonine). Asparagine 102 is lipidated: GPI-anchor amidated asparagine. The propeptide at glycine 103–proline 128 is removed in mature form.

In terms of assembly, interacts with T-cell surface antigen CD2. Post-translationally, N- and O-glycosylated. The N-glycosylation mainly consists of a family of biantennary complex-type structures with and without lactosamine extensions and outer arm fucose residues. Also significant amounts of triantennary complexes (22%). Variable sialylation also present in the Asn-43 oligosaccharide. The predominant O-glycans are mono-sialylated forms of the disaccharide, Gal-beta-1,3GalNAc, and their sites of attachment are probably on Thr-76 and Thr-77. The GPI-anchor of soluble urinary CD59 has no inositol-associated phospholipid, but is composed of seven different GPI-anchor variants of one or more monosaccharide units. Major variants contain sialic acid, mannose and glucosamine. Sialic acid linked to an N-acetylhexosamine-galactose arm is present in two variants. In terms of processing, glycated. Glycation is found in diabetic subjects, but only at minimal levels in nondiabetic subjects. Glycated CD59 lacks MAC-inhibitory function and confers to vascular complications of diabetes.

It localises to the cell membrane. The protein localises to the secreted. Potent inhibitor of the complement membrane attack complex (MAC) action, which protects human cells from damage during complement activation. Acts by binding to the beta-haipins of C8 (C8A and C8B) components of the assembling MAC, forming an intermolecular beta-sheet that prevents incorporation of the multiple copies of C9 required for complete formation of the osmolytic pore. Its function is as follows. The soluble form from urine retains its specific complement binding activity, but exhibits greatly reduced ability to inhibit complement membrane attack complex (MAC) assembly on cell membranes. In Homo sapiens (Human), this protein is CD59 glycoprotein.